The primary structure comprises 307 residues: 4-hydroxythreonine-4-phosphate dehydrogenase (307 aa).

Residues His126 and Thr127 each coordinate substrate. Positions 156, 195, and 251 each coordinate a divalent metal cation. Substrate contacts are provided by Lys259, Asn268, and Arg277.

The protein belongs to the PdxA family. In terms of assembly, homodimer. It depends on Zn(2+) as a cofactor. Mg(2+) is required as a cofactor. The cofactor is Co(2+).

Its subcellular location is the cytoplasm. It carries out the reaction 4-(phosphooxy)-L-threonine + NAD(+) = 3-amino-2-oxopropyl phosphate + CO2 + NADH. The protein operates within cofactor biosynthesis; pyridoxine 5'-phosphate biosynthesis; pyridoxine 5'-phosphate from D-erythrose 4-phosphate: step 4/5. Catalyzes the NAD(P)-dependent oxidation of 4-(phosphooxy)-L-threonine (HTP) into 2-amino-3-oxo-4-(phosphooxy)butyric acid which spontaneously decarboxylates to form 3-amino-2-oxopropyl phosphate (AHAP). The polypeptide is 4-hydroxythreonine-4-phosphate dehydrogenase (Helicobacter pylori (strain G27)).